The primary structure comprises 276 residues: Ribosomal RNA large subunit methyltransferase E (276 aa).

Residues G52, F54, D72, D90, and D114 each coordinate S-adenosyl-L-methionine. K154 functions as the Proton acceptor in the catalytic mechanism. The segment covering 203 to 249 has biased composition (low complexity); that stretch reads RAAPTANATPTPTSTSTSTPTSTSTPTSTSTSTPAPTLTQTQTQTPK. Residues 203–276 are disordered; it reads RAAPTANATP…AKTGASRRTR (74 aa). A compositionally biased stretch (basic residues) spans 265-276; that stretch reads AKAKTGASRRTR.

This sequence belongs to the class I-like SAM-binding methyltransferase superfamily. RNA methyltransferase RlmE family.

It is found in the cytoplasm. It catalyses the reaction uridine(2552) in 23S rRNA + S-adenosyl-L-methionine = 2'-O-methyluridine(2552) in 23S rRNA + S-adenosyl-L-homocysteine + H(+). Specifically methylates the uridine in position 2552 of 23S rRNA at the 2'-O position of the ribose in the fully assembled 50S ribosomal subunit. This Anaeromyxobacter sp. (strain Fw109-5) protein is Ribosomal RNA large subunit methyltransferase E.